Consider the following 1107-residue polypeptide: Copine family protein 1 (1107 aa).

Residues 1 to 22 (MVFDARLGYDPDEWEECPEPEH) lie on the Extracellular side of the membrane. Residues 23 to 45 (FLVFSGFTRYMLTFAAIAFVYYF) traverse the membrane as a helical segment. At 46–1107 (FKLLDDKNKK…IRREMMHNPL (1062 aa)) the chain is on the cytoplasmic side. A coiled-coil region spans residues 67 to 124 (VESVLAKAGDKLHDVKEQVQQHIPESAEELMREADQYLKEQAHSVQNNVHQFAEQAAN). Low complexity predominate over residues 478–488 (QLQQNQQQHQQ). 2 disordered regions span residues 478-501 (QLQQ…TADS) and 673-698 (HEPE…SRQV). A compositionally biased stretch (basic and acidic residues) spans 492–501 (IDRRRTTADS). Positions 687–698 (KNPSFEATSRQV) are enriched in polar residues. The VWFA domain occupies 863–1023 (NLIFGIDYTA…LSIIVVGVGD (161 aa)).

This sequence belongs to the copine family. May interact (via VWFA domain) with unc-89 (via Ig-like C2-type 1-3) and unc-96 (via C-terminus); cpna-1 binding sites for unc-89 and unc-96 are different. May interact with pat-6. May interact with lim-9 (via LIM domains) and with scpl-1 (via FCP1 homology domain). In terms of tissue distribution, expressed in body wall muscles (at protein level).

It is found in the basal cell membrane. It localises to the cytoplasm. The protein localises to the myofibril. Its subcellular location is the sarcomere. The protein resides in the m line. Involved in the assembly of dense bodies and M lines during body wall muscle development. Acts by recruiting downstream of integrin-associated protein pat-6/actopaxin several dense bodies and M line components including unc-89, lim-9, scpl-1 and unc-96 to integrin-mediated attachment sites. This is Copine family protein 1 from Caenorhabditis elegans.